A 508-amino-acid chain; its full sequence is Photosystem II CP47 reaction center protein (508 aa).

A run of 6 helical transmembrane segments spans residues 21-36 (AVHL…WAGS), 101-115 (ITLS…IWHW), 140-156 (GIHL…FGAF), 203-218 (IAAG…FHLS), 237-252 (VLSS…AFVV), and 457-472 (TFAL…HGAR).

Belongs to the PsbB/PsbC family. PsbB subfamily. As to quaternary structure, PSII is composed of 1 copy each of membrane proteins PsbA, PsbB, PsbC, PsbD, PsbE, PsbF, PsbH, PsbI, PsbJ, PsbK, PsbL, PsbM, PsbT, PsbX, PsbY, PsbZ, Psb30/Ycf12, at least 3 peripheral proteins of the oxygen-evolving complex and a large number of cofactors. It forms dimeric complexes. Requires Binds multiple chlorophylls. PSII binds additional chlorophylls, carotenoids and specific lipids. as cofactor.

The protein resides in the plastid. It localises to the chloroplast thylakoid membrane. In terms of biological role, one of the components of the core complex of photosystem II (PSII). It binds chlorophyll and helps catalyze the primary light-induced photochemical processes of PSII. PSII is a light-driven water:plastoquinone oxidoreductase, using light energy to abstract electrons from H(2)O, generating O(2) and a proton gradient subsequently used for ATP formation. This Psilotum nudum (Whisk fern) protein is Photosystem II CP47 reaction center protein.